A 401-amino-acid chain; its full sequence is LL-diaminopimelate aminotransferase (401 aa).

Tyr-15 and Gly-42 together coordinate substrate. Residues Tyr-72, 108-109 (AK), Tyr-132, Asn-176, Tyr-207, and 235-237 (SFS) each bind pyridoxal 5'-phosphate. Substrate-binding residues include Lys-109, Tyr-132, and Asn-176. Position 238 is an N6-(pyridoxal phosphate)lysine (Lys-238). The pyridoxal 5'-phosphate site is built by Arg-246 and Asn-281. Residues Asn-281 and Arg-377 each contribute to the substrate site.

Belongs to the class-I pyridoxal-phosphate-dependent aminotransferase family. LL-diaminopimelate aminotransferase subfamily. Homodimer. Requires pyridoxal 5'-phosphate as cofactor.

It catalyses the reaction (2S,6S)-2,6-diaminopimelate + 2-oxoglutarate = (S)-2,3,4,5-tetrahydrodipicolinate + L-glutamate + H2O + H(+). It functions in the pathway amino-acid biosynthesis; L-lysine biosynthesis via DAP pathway; LL-2,6-diaminopimelate from (S)-tetrahydrodipicolinate (aminotransferase route): step 1/1. Functionally, involved in the synthesis of meso-diaminopimelate (m-DAP or DL-DAP), required for both lysine and peptidoglycan biosynthesis. Catalyzes the direct conversion of tetrahydrodipicolinate to LL-diaminopimelate. This chain is LL-diaminopimelate aminotransferase, found in Azobacteroides pseudotrichonymphae genomovar. CFP2.